The sequence spans 411 residues: Adenylosuccinate synthetase (411 aa).

Residues 11 to 17 and 39 to 41 each bind GTP; these read GDEGKGK and GHT. The active-site Proton acceptor is the Asp-12. The Mg(2+) site is built by Asp-12 and Gly-39. Residues 12-15, 37-40, Thr-121, Arg-135, Gln-215, Thr-230, and Arg-294 contribute to the IMP site; these read DEGK and NAGH. The Proton donor role is filled by His-40. 290-296 contacts substrate; that stretch reads TTTKRPR. Residues Arg-296, 322–324, and 400–402 each bind GTP; these read KLD and STS.

The protein belongs to the adenylosuccinate synthetase family. As to quaternary structure, homodimer. It depends on Mg(2+) as a cofactor.

The protein localises to the cytoplasm. The enzyme catalyses IMP + L-aspartate + GTP = N(6)-(1,2-dicarboxyethyl)-AMP + GDP + phosphate + 2 H(+). Its pathway is purine metabolism; AMP biosynthesis via de novo pathway; AMP from IMP: step 1/2. Its function is as follows. Plays an important role in the de novo pathway of purine nucleotide biosynthesis. Catalyzes the first committed step in the biosynthesis of AMP from IMP. This Helicobacter pylori (strain J99 / ATCC 700824) (Campylobacter pylori J99) protein is Adenylosuccinate synthetase.